We begin with the raw amino-acid sequence, 432 residues long: Serine--tRNA ligase (432 aa).

230–232 provides a ligand contact to L-serine; the sequence is TAE. 261-263 lines the ATP pocket; sequence RSE. Residue Glu-284 participates in L-serine binding. 348 to 351 contacts ATP; the sequence is EVSS. Ser-383 contributes to the L-serine binding site.

This sequence belongs to the class-II aminoacyl-tRNA synthetase family. Type-1 seryl-tRNA synthetase subfamily. Homodimer. The tRNA molecule binds across the dimer.

It is found in the cytoplasm. It catalyses the reaction tRNA(Ser) + L-serine + ATP = L-seryl-tRNA(Ser) + AMP + diphosphate + H(+). The enzyme catalyses tRNA(Sec) + L-serine + ATP = L-seryl-tRNA(Sec) + AMP + diphosphate + H(+). It functions in the pathway aminoacyl-tRNA biosynthesis; selenocysteinyl-tRNA(Sec) biosynthesis; L-seryl-tRNA(Sec) from L-serine and tRNA(Sec): step 1/1. In terms of biological role, catalyzes the attachment of serine to tRNA(Ser). Is also able to aminoacylate tRNA(Sec) with serine, to form the misacylated tRNA L-seryl-tRNA(Sec), which will be further converted into selenocysteinyl-tRNA(Sec). In Limosilactobacillus fermentum (strain NBRC 3956 / LMG 18251) (Lactobacillus fermentum), this protein is Serine--tRNA ligase.